The following is a 430-amino-acid chain: Alpha-1,6-mannosyl-glycoprotein 2-beta-N-acetylglucosaminyltransferase (430 aa).

Residues 1–12 lie on the Cytoplasmic side of the membrane; it reads MANLWKKQRLRD. A helical; Signal-anchor for type II membrane protein membrane pass occupies residues 13–35; sequence TGLCRLGILFAVTLSIVLMLVSV. The Lumenal portion of the chain corresponds to 36 to 430; that stretch reads PRTALNGSSI…YRYSSSSASP (395 aa). N41 and N61 each carry an N-linked (GlcNAc...) asparagine glycan. Substrate contacts are provided by residues 104–108 and D135; that span reads YVHNR. C177 and C188 are disulfide-bonded. 205–209 lines the substrate pocket; that stretch reads SLKHH. D237 provides a ligand contact to Mn(2+). A disulfide bridge links C259 with C262. An N-linked (GlcNAc...) asparagine glycan is attached at N295. C310 and C414 form a disulfide bridge. Position 345 (H345) interacts with Mn(2+).

Belongs to the glycosyltransferase 16 (GT16) protein family. Requires Mn(2+) as cofactor.

It localises to the golgi apparatus membrane. The catalysed reaction is an N(4)-{beta-D-GlcNAc-(1-&gt;2)-alpha-D-Man-(1-&gt;3)-[alpha-D-Man-(1-&gt;6)]-beta-D-Man-(1-&gt;4)-beta-D-GlcNAc-(1-&gt;4)-beta-D-GlcNAc}-L-asparaginyl-[protein] + UDP-N-acetyl-alpha-D-glucosamine = N(4)-{beta-D-GlcNAc-(1-&gt;2)-alpha-D-Man-(1-&gt;3)-[beta-D-GlcNAc-(1-&gt;2)-alpha-D-Man-(1-&gt;6)]-beta-D-Man-(1-&gt;4)-beta-D-GlcNAc-(1-&gt;4)-beta-D-GlcNAc}-L-asparaginyl-[protein] + UDP + H(+). It functions in the pathway protein modification; protein glycosylation. Catalyzes an essential step in the conversion of oligo-mannose and hybrid to complex N-glycans. This Arabidopsis thaliana (Mouse-ear cress) protein is Alpha-1,6-mannosyl-glycoprotein 2-beta-N-acetylglucosaminyltransferase.